The following is a 184-amino-acid chain: RNA 2',3'-cyclic phosphodiesterase (184 aa).

Residue H40 is the Proton donor of the active site. 2 consecutive short sequence motifs (HXTX) follow at residues 40–43 (HITL) and 125–128 (HITL). H125 serves as the catalytic Proton acceptor.

This sequence belongs to the 2H phosphoesterase superfamily. ThpR family.

The enzyme catalyses a 3'-end 2',3'-cyclophospho-ribonucleotide-RNA + H2O = a 3'-end 2'-phospho-ribonucleotide-RNA + H(+). Its function is as follows. Hydrolyzes RNA 2',3'-cyclic phosphodiester to an RNA 2'-phosphomonoester. In vitro, ligates 5' and 3' half-tRNA molecules with 2',3'-cyclic phosphate and 5'-hydroxyl termini, respectively, to the product containing the 2'-5' phosphodiester linkage. Ligase activity requires GTP, but GTP hydrolysis is not required for the reaction, which is reversible. Ligase activity is weak compared to the phosphodiesterase activity. The polypeptide is RNA 2',3'-cyclic phosphodiesterase (Pyrococcus furiosus (strain ATCC 43587 / DSM 3638 / JCM 8422 / Vc1)).